Reading from the N-terminus, the 1302-residue chain is 1-phosphatidylinositol 4,5-bisphosphate phosphodiesterase gamma-1 (1302 aa).

A2 bears the N-acetylalanine mark. In terms of domain architecture, PH 1 spans 27–142 (RSLEVGTVMT…WIKGLTWLME (116 aa)). The 36-residue stretch at 152-187 (QIERWLRKQFYSVDRNREDRISAKDLKNMLSQVNYR) folds into the EF-hand domain. Positions 165, 167, 169, 171, and 176 each coordinate Ca(2+). The region spanning 320–464 (DTMNNPLSHY…LRRKILIKHK (145 aa)) is the PI-PLC X-box domain. Residues H335 and H380 contribute to the active site. The PH 2; first part domain maps to 489 to 523 (SIKNGILYLEDPVNHEWYPHYFVLTSSKIYYSEET). Phosphotyrosine is present on Y506. Positions 522–545 (ETSSDQGNEDEEEPKEASSSTELH) are disordered. 2 consecutive SH2 domains span residues 550–657 (WFHG…SEPV) and 668–756 (WYHA…RYPI). A Phosphotyrosine; by SYK modification is found at Y771. Y775 is modified (phosphotyrosine). Y783 carries the post-translational modification Phosphotyrosine; by ITK, SYK and TXK. An SH3 domain is found at 791–851 (TFKCAVKALF…PSNYVEEMIN (61 aa)). A PH 2; second part domain is found at 895 to 931 (FVFSISMPSVAQWSLDVAADSQEELQDWVKKIREVAQ). One can recognise a PI-PLC Y-box domain in the interval 953 to 1070 (LSELVVYCRP…GYVLQPSTMR (118 aa)). Position 977 is a phosphotyrosine (Y977). Residues 1071 to 1194 (DEAFDPFDKS…TGYRAVPLKN (124 aa)) enclose the C2 domain. A phosphoserine mark is found at S1221, S1227, S1233, and S1248. Position 1253 is a phosphotyrosine (Y1253). Position 1263 is a phosphoserine (S1263).

In terms of assembly, interacts (via SH2 domain) with FGFR1, FGFR2, FGFR3 and FGFR4 (phosphorylated). Interacts with RALGPS1. Interacts (via SH2 domains) with VIL1 (phosphorylated at C-terminus tyrosine phosphorylation sites). Interacts (via SH2 domain) with RET. Interacts with AGAP2 via its SH3 domain. Interacts with LAT (phosphorylated) upon TCR activation. Interacts (via SH3 domain) with the Pro-rich domain of TNK1. Associates with BLNK, VAV1, GRB2 and NCK1 in a B-cell antigen receptor-dependent fashion. Interacts with CBLB in activated T-cells; which inhibits phosphorylation. Interacts with SHB. Interacts (via SH3 domain) with the Arg/Gly-rich-flanked Pro-rich domains of KHDRBS1/SAM68. This interaction is selectively regulated by arginine methylation of KHDRBS1/SAM68. Interacts with INPP5D/SHIP1, THEMIS and CLNK. Interacts with FLT4 and KIT. Interacts with AXL. Interacts with SYK; activates PLCG1. Interacts with FLT1 (tyrosine-phosphorylated). Interacts (via SH2 domain) with PDGFRA and PDGFRB (tyrosine phosphorylated). Interacts with PIP5K1C. Interacts with NTRK1 and NTRK2 (phosphorylated upon ligand-binding). Interacts with TESPA1. Interacts with GRB2, LAT and THEMIS upon TCR activation in thymocytes; the association is weaker in the absence of TESPA1. Interacts (via C-terminal proline-rich domain (PRD)) with PLCG1 (via SH3 domain); this interaction leads to guanine nucleotide exchange from PlCG1 to DNM1 and enhances DNM1-dependent endocytosis. The cofactor is Ca(2+). In terms of processing, tyrosine phosphorylated in response to signaling via activated FLT3, KIT and PDGFRA. Tyrosine phosphorylated by activated FGFR1, FGFR2, FGFR3 and FGFR4. Tyrosine phosphorylated by activated FLT1 and KDR. Tyrosine phosphorylated by activated PDGFRB. The receptor-mediated activation of PLCG1 involves its phosphorylation by tyrosine kinases in response to ligation of a variety of growth factor receptors and immune system receptors. For instance, SYK phosphorylates and activates PLCG1 in response to ligation of the B-cell receptor. Phosphorylated by ITK and TXK on Tyr-783 upon TCR activation in T-cells. May be dephosphorylated by PTPRJ. Ubiquitinated by CBLB in activated T-cells.

The protein resides in the cell projection. The protein localises to the lamellipodium. Its subcellular location is the ruffle. The catalysed reaction is a 1,2-diacyl-sn-glycero-3-phospho-(1D-myo-inositol-4,5-bisphosphate) + H2O = 1D-myo-inositol 1,4,5-trisphosphate + a 1,2-diacyl-sn-glycerol + H(+). It carries out the reaction a 1,2-diacyl-sn-glycero-3-phospho-(1D-myo-inositol) + H2O = 1D-myo-inositol 1-phosphate + a 1,2-diacyl-sn-glycerol + H(+). Activated by phosphorylation on tyrosine residues. Its function is as follows. Mediates the production of the second messenger molecules diacylglycerol (DAG) and inositol 1,4,5-trisphosphate (IP3). Plays an important role in the regulation of intracellular signaling cascades. Becomes activated in response to ligand-mediated activation of receptor-type tyrosine kinases, such as PDGFRA, PDGFRB, EGFR, FGFR1, FGFR2, FGFR3 and FGFR4. Plays a role in actin reorganization and cell migration. Guanine nucleotide exchange factor that binds the GTPase DNM1 and catalyzes the dissociation of GDP, allowing a GTP molecule to bind in its place, therefore enhancing DNM1-dependent endocytosis. The chain is 1-phosphatidylinositol 4,5-bisphosphate phosphodiesterase gamma-1 from Mus musculus (Mouse).